A 96-amino-acid chain; its full sequence is Co-chaperonin GroES (96 aa).

Belongs to the GroES chaperonin family. Heptamer of 7 subunits arranged in a ring. Interacts with the chaperonin GroEL.

Its subcellular location is the cytoplasm. In terms of biological role, together with the chaperonin GroEL, plays an essential role in assisting protein folding. The GroEL-GroES system forms a nano-cage that allows encapsulation of the non-native substrate proteins and provides a physical environment optimized to promote and accelerate protein folding. GroES binds to the apical surface of the GroEL ring, thereby capping the opening of the GroEL channel. The sequence is that of Co-chaperonin GroES from Neisseria meningitidis serogroup A / serotype 4A (strain DSM 15465 / Z2491).